Here is a 458-residue protein sequence, read N- to C-terminus: Ammonium transporter Rh type B (458 aa).

Residues 1–11 (MTDAATNMRLK) are Cytoplasmic-facing. The chain crosses the membrane as a helical span at residues 12–32 (LPITCFILEIILIILFGTLVQ). Residues 33 to 58 (YDYETDAKEWHNTSHQDYENDFYFRY) lie on the Extracellular side of the membrane. N44 is a glycosylation site (N-linked (GlcNAc...) asparagine). The chain crosses the membrane as a helical span at residues 59 to 79 (PSFQDVHVMIFVGFGFLMTFL). Over 80–83 (QRYG) the chain is Cytoplasmic. A helical membrane pass occupies residues 84–104 (FGSVGFNFLIAAFSLQWATLM). Topologically, residues 105 to 121 (QGFFHGMHGGKIHIGVE) are extracellular. A helical membrane pass occupies residues 122–142 (SMINADFCTGSVLISFGAVLG). Over 143–151 (KTSPIQLLT) the chain is Cytoplasmic. Residues 152–172 (MAIFEVTLFAVNEFILLSLLG) traverse the membrane as a helical segment. Over 173–176 (TKDA) the chain is Extracellular. A helical membrane pass occupies residues 177 to 197 (GGSMTIHTFGAYFGLMVTRIL). Residues 198–216 (YRPNLDKSKHRNSSVYHSD) lie on the Cytoplasmic side of the membrane. A helical transmembrane segment spans residues 217 to 237 (LFAMIGTVYLWMFWPSFNSAI). Residues 238-247 (TAHGDDQHRT) are Extracellular-facing. The helical transmembrane segment at 248–270 (ALNTYYSLAACTLATYGMSAITS) threads the bilayer. Over 271–274 (HDGK) the chain is Cytoplasmic. A helical transmembrane segment spans residues 275 to 295 (LDMVHIQNAALAGGVAVGTAG). Residues 296-298 (EMM) lie on the Extracellular side of the membrane. A helical transmembrane segment spans residues 299 to 319 (LTPFGSMIVGFMAGIISVLGF). Residues 320 to 340 (KFLSPILEDKLKIQDTCGIHN) are Cytoplasmic-facing. Residues 341–361 (LHGMPGVLGAIVGAVTAALAT) traverse the membrane as a helical segment. At 362–391 (TDVYGQGMADVFPAVADGSVNATKQGGIQA) the chain is on the extracellular side. Residues 392-412 (LSLAITLGIAVLGGLIVGFVL) form a helical membrane-spanning segment. The Cytoplasmic segment spans residues 413–458 (KLPVFGTPPDTLCFEDSVYWEVPGSESPEEGELTSVKPEETEHLNS). Residues 436-458 (GSESPEEGELTSVKPEETEHLNS) are disordered. Residues 449 to 458 (KPEETEHLNS) are compositionally biased toward basic and acidic residues.

This sequence belongs to the ammonium transporter (TC 2.A.49) family. Rh subfamily. Specifically expressed in the gill by pavement cells (at protein level).

It localises to the apicolateral cell membrane. The protein resides in the cytoplasmic vesicle membrane. Functionally, functions as an ammonia transporter. May play a role in the elimination of ammonia in the gill. This chain is Ammonium transporter Rh type B (rhbg), found in Takifugu rubripes (Japanese pufferfish).